Here is a 215-residue protein sequence, read N- to C-terminus: L-fuculose phosphate aldolase (215 aa).

Substrate is bound by residues 28–29, 43–44, and 71–72; these read GN, TG, and SS. Residue Glu73 is the Proton donor/acceptor of the active site. Zn(2+)-binding residues include Glu73, His92, His94, and His155.

Belongs to the aldolase class II family. AraD/FucA subfamily. Homotetramer. Zn(2+) serves as cofactor.

The catalysed reaction is L-fuculose 1-phosphate = (S)-lactaldehyde + dihydroxyacetone phosphate. Its pathway is carbohydrate degradation; L-fucose degradation; L-lactaldehyde and glycerone phosphate from L-fucose: step 3/3. In terms of biological role, involved in the degradation of L-fucose and D-arabinose. Catalyzes the reversible cleavage of L-fuculose 1-phosphate (Fuc1P) to yield dihydroxyacetone phosphate (DHAP) and L-lactaldehyde. The protein is L-fuculose phosphate aldolase of Escherichia coli O6:H1 (strain CFT073 / ATCC 700928 / UPEC).